The primary structure comprises 105 residues: Protein E7 (105 aa).

The tract at residues methionine 1–glutamate 45 is E7 terminal domain. The LXCXE motif; interaction with host RB1 and TMEM173/STING signature appears at leucine 23–glutamate 27. Residues cysteine 65 to cysteine 101 fold into a zinc finger. The short motif at leucine 83 to methionine 91 is the Nuclear export signal element.

This sequence belongs to the papillomaviridae E7 protein family. In terms of assembly, homodimer. Homooligomer. Interacts with host RB1; this interaction induces dissociation of RB1-E2F1 complex thereby disrupting RB1 activity. Interacts with host EP300; this interaction represses EP300 transcriptional activity. Interacts with protein E2; this interaction inhibits E7 oncogenic activity. Interacts with host TMEM173/STING; this interaction impairs the ability of TMEM173/STING to sense cytosolic DNA and promote the production of type I interferon (IFN-alpha and IFN-beta). Post-translationally, highly phosphorylated.

The protein resides in the host cytoplasm. Its subcellular location is the host nucleus. Functionally, plays a role in viral genome replication by driving entry of quiescent cells into the cell cycle. Stimulation of progression from G1 to S phase allows the virus to efficiently use the cellular DNA replicating machinery to achieve viral genome replication. E7 protein has both transforming and trans-activating activities. Induces the disassembly of the E2F1 transcription factor from RB1, with subsequent transcriptional activation of E2F1-regulated S-phase genes. Interferes with host histone deacetylation mediated by HDAC1 and HDAC2, leading to transcription activation. Also plays a role in the inhibition of both antiviral and antiproliferative functions of host interferon alpha. Interaction with host TMEM173/STING impairs the ability of TMEM173/STING to sense cytosolic DNA and promote the production of type I interferon (IFN-alpha and IFN-beta). This Homo sapiens (Human) protein is Protein E7.